Reading from the N-terminus, the 255-residue chain is 1-(5-phosphoribosyl)-5-[(5-phosphoribosylamino)methylideneamino] imidazole-4-carboxamide isomerase (255 aa).

Residue aspartate 8 is the Proton acceptor of the active site. Catalysis depends on aspartate 129, which acts as the Proton donor.

The protein belongs to the HisA/HisF family.

It is found in the cytoplasm. The catalysed reaction is 1-(5-phospho-beta-D-ribosyl)-5-[(5-phospho-beta-D-ribosylamino)methylideneamino]imidazole-4-carboxamide = 5-[(5-phospho-1-deoxy-D-ribulos-1-ylimino)methylamino]-1-(5-phospho-beta-D-ribosyl)imidazole-4-carboxamide. The protein operates within amino-acid biosynthesis; L-histidine biosynthesis; L-histidine from 5-phospho-alpha-D-ribose 1-diphosphate: step 4/9. The polypeptide is 1-(5-phosphoribosyl)-5-[(5-phosphoribosylamino)methylideneamino] imidazole-4-carboxamide isomerase (Synechococcus sp. (strain CC9605)).